The chain runs to 406 residues: MSQPITRENFNEWMIPVYAPAPFIPVRGEGSRLWDQQGKEYIDFAGGIAVNALGHAHPELREALNEQASKFWHTGNGYTNEPVLRLAKKLIDATFADRVFFCNSGAEANEAALKLARKFAHDRYGSHKSGIVAFKNAFHGRTLFTVSAGGQPAYSQDFAPLPPDIRHAAYNDINSASALIDDATCAVIVEPIQGEGGVVPASNAFLQDLRELCDRHNALLIFDEVQTGVGRTGELYAYMHYGVTPDLLTTAKALGGGFPVGALLATEECARVMTVGTHGTTYGGNPLASAVAGKVLELINTPEMLNGVKQRHDWFVERLNTLNHRYGLFSEVRGLGLLIGCVLNADYAGQAKQISQEAAKAGVMVLIAGGNVVRFAPALNVSEEEVTTGLDRFAAACEHFVSRGSS.

N6-(pyridoxal phosphate)lysine is present on lysine 252.

Belongs to the class-III pyridoxal-phosphate-dependent aminotransferase family. AstC subfamily. Pyridoxal 5'-phosphate serves as cofactor.

The catalysed reaction is N(2)-succinyl-L-ornithine + 2-oxoglutarate = N-succinyl-L-glutamate 5-semialdehyde + L-glutamate. The protein operates within amino-acid degradation; L-arginine degradation via AST pathway; L-glutamate and succinate from L-arginine: step 3/5. Catalyzes the transamination of N(2)-succinylornithine and alpha-ketoglutarate into N(2)-succinylglutamate semialdehyde and glutamate. Can also act as an acetylornithine aminotransferase. This chain is Succinylornithine transaminase, found in Escherichia coli (strain 55989 / EAEC).